Here is a 394-residue protein sequence, read N- to C-terminus: DNA replication and repair protein RecF (394 aa).

ATP is bound at residue 30 to 37; sequence GSNGQGKT.

Belongs to the RecF family.

It localises to the cytoplasm. In terms of biological role, the RecF protein is involved in DNA metabolism; it is required for DNA replication and normal SOS inducibility. RecF binds preferentially to single-stranded, linear DNA. It also seems to bind ATP. In Cutibacterium acnes (strain DSM 16379 / KPA171202) (Propionibacterium acnes), this protein is DNA replication and repair protein RecF.